A 388-amino-acid polypeptide reads, in one-letter code: Succinate--CoA ligase [ADP-forming] subunit beta (388 aa).

An ATP-grasp domain is found at 9–244 (KEIFARYGLP…PTQESELEVK (236 aa)). Residues Lys-46, 53-55 (GRG), Glu-99, Thr-102, and Glu-107 contribute to the ATP site. Mg(2+) is bound by residues Asn-199 and Asp-213. Substrate contacts are provided by residues Asn-264 and 321-323 (GIL).

This sequence belongs to the succinate/malate CoA ligase beta subunit family. Heterotetramer of two alpha and two beta subunits. Mg(2+) is required as a cofactor.

It catalyses the reaction succinate + ATP + CoA = succinyl-CoA + ADP + phosphate. The catalysed reaction is GTP + succinate + CoA = succinyl-CoA + GDP + phosphate. It functions in the pathway carbohydrate metabolism; tricarboxylic acid cycle; succinate from succinyl-CoA (ligase route): step 1/1. In terms of biological role, succinyl-CoA synthetase functions in the citric acid cycle (TCA), coupling the hydrolysis of succinyl-CoA to the synthesis of either ATP or GTP and thus represents the only step of substrate-level phosphorylation in the TCA. The beta subunit provides nucleotide specificity of the enzyme and binds the substrate succinate, while the binding sites for coenzyme A and phosphate are found in the alpha subunit. This chain is Succinate--CoA ligase [ADP-forming] subunit beta, found in Persephonella marina (strain DSM 14350 / EX-H1).